Reading from the N-terminus, the 355-residue chain is UDP-N-acetylglucosamine--N-acetylmuramyl-(pentapeptide) pyrophosphoryl-undecaprenol N-acetylglucosamine transferase (355 aa).

UDP-N-acetyl-alpha-D-glucosamine is bound by residues 12-14, Asn-124, Arg-163, Ser-191, Ile-243, 262-267, and Gln-288; these read TGG and ALTVAE.

It belongs to the glycosyltransferase 28 family. MurG subfamily.

The protein localises to the cell inner membrane. It carries out the reaction di-trans,octa-cis-undecaprenyl diphospho-N-acetyl-alpha-D-muramoyl-L-alanyl-D-glutamyl-meso-2,6-diaminopimeloyl-D-alanyl-D-alanine + UDP-N-acetyl-alpha-D-glucosamine = di-trans,octa-cis-undecaprenyl diphospho-[N-acetyl-alpha-D-glucosaminyl-(1-&gt;4)]-N-acetyl-alpha-D-muramoyl-L-alanyl-D-glutamyl-meso-2,6-diaminopimeloyl-D-alanyl-D-alanine + UDP + H(+). Its pathway is cell wall biogenesis; peptidoglycan biosynthesis. Cell wall formation. Catalyzes the transfer of a GlcNAc subunit on undecaprenyl-pyrophosphoryl-MurNAc-pentapeptide (lipid intermediate I) to form undecaprenyl-pyrophosphoryl-MurNAc-(pentapeptide)GlcNAc (lipid intermediate II). In Tolumonas auensis (strain DSM 9187 / NBRC 110442 / TA 4), this protein is UDP-N-acetylglucosamine--N-acetylmuramyl-(pentapeptide) pyrophosphoryl-undecaprenol N-acetylglucosamine transferase.